A 201-amino-acid polypeptide reads, in one-letter code: MITNNLVPTVIEKTAGGERAFDIYSRLLKERIVFLNGEVNDHSANLVIAQLLFLESEDPDKDIYFYINSPGGMVTAGMGVYDTMQFIKPDVNTICIGLAASMGSLLLAGGAKGKRYSLPSSQIMIHQPLGGFRGQASDIEIHAKNILRIKDRLNKVLAHHTGQDLETIVRDTDRDNFMMADEAKEYGLIDHVIESREAIIK.

Serine 101 serves as the catalytic Nucleophile. Histidine 126 is an active-site residue.

The protein belongs to the peptidase S14 family. As to quaternary structure, fourteen ClpP subunits assemble into 2 heptameric rings which stack back to back to give a disk-like structure with a central cavity, resembling the structure of eukaryotic proteasomes.

The protein localises to the cytoplasm. It carries out the reaction Hydrolysis of proteins to small peptides in the presence of ATP and magnesium. alpha-casein is the usual test substrate. In the absence of ATP, only oligopeptides shorter than five residues are hydrolyzed (such as succinyl-Leu-Tyr-|-NHMec, and Leu-Tyr-Leu-|-Tyr-Trp, in which cleavage of the -Tyr-|-Leu- and -Tyr-|-Trp bonds also occurs).. Functionally, cleaves peptides in various proteins in a process that requires ATP hydrolysis. Has a chymotrypsin-like activity. Plays a major role in the degradation of misfolded proteins. This is ATP-dependent Clp protease proteolytic subunit from Francisella philomiragia subsp. philomiragia (strain ATCC 25017 / CCUG 19701 / FSC 153 / O#319-036).